Here is a 599-residue protein sequence, read N- to C-terminus: Omega-hydroxyceramide transacylase (599 aa).

A PNPLA domain is found at 16 to 185; the sequence is ISFSGSGFLS…TSMQPCSFWT (170 aa). The GXSXG motif lies at 51–55; that stretch reads GTSAG. The Nucleophile role is filled by Ser-53. The active-site Proton acceptor is Asp-172. The DGA/G motif lies at 172–174; it reads DGG. Residues 289–563 form a disordered region; the sequence is PPPPSLQNLP…PASKLKSAPC (275 aa). Composition is skewed to polar residues over residues 325-335 and 350-362; these read SSAAPSVQTPE and VSIS…SPLS. The span at 443–454 shows a compositional bias: low complexity; it reads SPESPRLLLRSS. A compositionally biased stretch (pro residues) spans 468–478; the sequence is PLSPSTPPAGP. Residues 490–501 show a composition bias toward polar residues; sequence ATGSPALSQLTG. Over residues 551–563 the composition is skewed to low complexity; the sequence is SKKPASKLKSAPC.

Specifically expressed in skin by keratinocytes, at the boundary area between the nucleated stratum granulosum and the denucleated stratum corneum in the epidermis (at protein level). Also expressed in stomach and other surface lining tissues like intestine and tongue. Also detected in testis as well as in other tissues but at very low level.

It localises to the cytoplasm. The enzyme catalyses an N-(omega-hydroxy-ultra-long chain fatty acyl)-sphingoid base + a (9Z,12Z)-octadecadienoyl-containing triacyl-sn-glycerol = an N-[omega-(9Z,12Z-octadecadienoyloxy)-O-ultra-long chain fatty acyl]-sphingoid base + a diacylglycerol. It catalyses the reaction an N-(omega-hydroxy-ultra-long chain fatty acyl)-sphing-4-enine + a (9Z,12Z)-octadecadienoyl-containing triacyl-sn-glycerol = an N-(omega-(9Z,12Z-octadecadienoyloxy)-ultra-long chain fatty acyl)-sphing-4-enine + a diacylglycerol. It carries out the reaction N-(28-hydroxyoctacosanoyl)-sphing-4-enine + a (9Z,12Z)-octadecadienoyl-containing triacyl-sn-glycerol = N-(28-(9Z,12Z-octadecadienoyloxy)-octacosanoyl)-sphing-4-enine + a diacylglycerol. The catalysed reaction is N-(30-hydroxytriacontanoyl)-sphing-4-enine + 1,2,3-tri-(9Z,12Z)-octadecadienoylglycerol = N-[30-(9Z,12Z-octadecadienoyloxy)-triacontanoyl]-sphing-4-enine + di-(9Z,12Z)-octadecadienoylglycerol. The enzyme catalyses N-(32-hydroxydotriacontanoyl)-sphing-4-enine + a (9Z,12Z)-octadecadienoyl-containing triacyl-sn-glycerol = N-(32-(9Z,12Z-octadecadienoyloxy)-dotricontanoyl)-sphing-4-enine + a diacylglycerol. It catalyses the reaction N-(32-hydroxydotriacontenoyl)-sphing-4-enine + a (9Z,12Z)-octadecadienoyl-containing triacyl-sn-glycerol = an N-(32-(9Z,12Z-octadecadienoyloxy)-dotriacontenoyl)-sphing-4-enine + a diacylglycerol. It carries out the reaction an N-(34-hydroxytetratriacontenoyl)-sphing-4-enine + a (9Z,12Z)-octadecadienoyl-containing triacyl-sn-glycerol = an N-(34-(9Z,12Z-octadecadienoyloxy)-tetratriacontenoyl)-sphing-4-enine + a diacylglycerol. The catalysed reaction is an N-(34-hydroxytetratriacontadienoyl)-sphing-4-enine + a (9Z,12Z)-octadecadienoyl-containing triacyl-sn-glycerol = an N-(34-(9Z,12Z-octadecadienoyloxy)-tetratriacontadienoyl)-sphing-4-enine + a diacylglycerol. The enzyme catalyses an N-(36-hydroxyhexatriacontenoyl)-sphing-4-enine + a (9Z,12Z)-octadecadienoyl-containing triacyl-sn-glycerol = an N-(36-(9Z,12Z-octadecadienoyloxy)-hexatriacontenoyl)-sphing-4-enine + a diacylglycerol. It catalyses the reaction an N-(36-hydroxyhexatriacontadienoyl)-sphing-4-enine + a (9Z,12Z)-octadecadienoyl-containing triacyl-sn-glycerol = an N-(36-(9Z,12Z-octadecadienoyloxy)-hexatriacontadienoyl)-sphing-4-enine + a diacylglycerol. It carries out the reaction an N-(38-hydroxyoctatriacontenoyl)-sphing-4-enine + a (9Z,12Z)-octadecadienoyl-containing triacyl-sn-glycerol = an N-(38-(9Z,12Z-octadecadienoyloxy)-octatriacontenoyl)-sphing-4-enine + a diacylglycerol. Omega-hydroxyceramide transacylase involved in the synthesis of omega-O-acylceramides (esterified omega-hydroxyacyl-sphingosine; EOS), which are extremely hydrophobic lipids involved in skin barrier formation. Catalyzes the last step of the synthesis of omega-O-acylceramides by transferring linoleic acid from triglycerides to an omega-hydroxyceramide. Omega-O-acylceramides, are required for the biogenesis of lipid lamellae in the stratum corneum and the formation of the cornified lipid envelope which are essential for the epidermis barrier function. These lipids also play a role in keratinocyte differentiation. May also act on omega-hydroxylated ultra-long chain fatty acids (omega-OH ULCFA) and acylglucosylceramides (GlcEOS). This Mus musculus (Mouse) protein is Omega-hydroxyceramide transacylase.